The primary structure comprises 234 residues: Small ribosomal subunit protein eS4 (234 aa).

The 64-residue stretch at 39–102 (MPLVVVLRDL…NANYRVVIGM (64 aa)) folds into the S4 RNA-binding domain.

It belongs to the eukaryotic ribosomal protein eS4 family.

The protein is Small ribosomal subunit protein eS4 of Methanocella arvoryzae (strain DSM 22066 / NBRC 105507 / MRE50).